Reading from the N-terminus, the 544-residue chain is Chaperonin GroEL 2 (544 aa).

ATP is bound by residues 30–33 (TLGP), 87–91 (DGTTT), glycine 415, 480–482 (NAA), and aspartate 496.

Belongs to the chaperonin (HSP60) family. Forms a cylinder of 14 subunits composed of two heptameric rings stacked back-to-back. Interacts with the co-chaperonin GroES.

Its subcellular location is the cytoplasm. It carries out the reaction ATP + H2O + a folded polypeptide = ADP + phosphate + an unfolded polypeptide.. Its function is as follows. Together with its co-chaperonin GroES, plays an essential role in assisting protein folding. The GroEL-GroES system forms a nano-cage that allows encapsulation of the non-native substrate proteins and provides a physical environment optimized to promote and accelerate protein folding. The sequence is that of Chaperonin GroEL 2 from Albidiferax ferrireducens (strain ATCC BAA-621 / DSM 15236 / T118) (Rhodoferax ferrireducens).